We begin with the raw amino-acid sequence, 414 residues long: 5-aminolevulinate synthase (414 aa).

3 residues coordinate substrate: Arg22, Ser133, and Lys152. Residues Ser185, His213, and Thr241 each coordinate pyridoxal 5'-phosphate. Residue Lys244 is part of the active site. Lys244 carries the post-translational modification N6-(pyridoxal phosphate)lysine. The pyridoxal 5'-phosphate site is built by Thr273 and Thr274. Residue Thr359 coordinates substrate.

The protein belongs to the class-II pyridoxal-phosphate-dependent aminotransferase family. As to quaternary structure, homodimer. The cofactor is pyridoxal 5'-phosphate.

The catalysed reaction is succinyl-CoA + glycine + H(+) = 5-aminolevulinate + CO2 + CoA. It participates in porphyrin-containing compound metabolism; protoporphyrin-IX biosynthesis; 5-aminolevulinate from glycine: step 1/1. In Rickettsia felis (strain ATCC VR-1525 / URRWXCal2) (Rickettsia azadi), this protein is 5-aminolevulinate synthase (hemA).